A 459-amino-acid chain; its full sequence is Bifunctional protein GlmU (459 aa).

The pyrophosphorylase stretch occupies residues 1–230 (MVKRYAVILA…FDETIGINDR (230 aa)). UDP-N-acetyl-alpha-D-glucosamine-binding positions include 9–12 (LAAG), Lys23, Gln73, and 78–79 (GT). Asp103 is a binding site for Mg(2+). The UDP-N-acetyl-alpha-D-glucosamine site is built by Gly140, Glu155, Asn170, and Asn228. Asn228 contributes to the Mg(2+) binding site. Residues 231–251 (IALAEAERIMRDRICRQHMKN) are linker. Positions 252–459 (GVTIIDPACT…VDRLRGKKKS (208 aa)) are N-acetyltransferase. Positions 333 and 351 each coordinate UDP-N-acetyl-alpha-D-glucosamine. His363 serves as the catalytic Proton acceptor. Residues Tyr366 and Asn377 each coordinate UDP-N-acetyl-alpha-D-glucosamine. Residues 386–387 (NY), Ala423, and Arg440 each bind acetyl-CoA.

This sequence in the N-terminal section; belongs to the N-acetylglucosamine-1-phosphate uridyltransferase family. In the C-terminal section; belongs to the transferase hexapeptide repeat family. Homotrimer. Mg(2+) serves as cofactor.

The protein localises to the cytoplasm. The catalysed reaction is alpha-D-glucosamine 1-phosphate + acetyl-CoA = N-acetyl-alpha-D-glucosamine 1-phosphate + CoA + H(+). It catalyses the reaction N-acetyl-alpha-D-glucosamine 1-phosphate + UTP + H(+) = UDP-N-acetyl-alpha-D-glucosamine + diphosphate. The protein operates within nucleotide-sugar biosynthesis; UDP-N-acetyl-alpha-D-glucosamine biosynthesis; N-acetyl-alpha-D-glucosamine 1-phosphate from alpha-D-glucosamine 6-phosphate (route II): step 2/2. It participates in nucleotide-sugar biosynthesis; UDP-N-acetyl-alpha-D-glucosamine biosynthesis; UDP-N-acetyl-alpha-D-glucosamine from N-acetyl-alpha-D-glucosamine 1-phosphate: step 1/1. It functions in the pathway bacterial outer membrane biogenesis; LPS lipid A biosynthesis. Its function is as follows. Catalyzes the last two sequential reactions in the de novo biosynthetic pathway for UDP-N-acetylglucosamine (UDP-GlcNAc). The C-terminal domain catalyzes the transfer of acetyl group from acetyl coenzyme A to glucosamine-1-phosphate (GlcN-1-P) to produce N-acetylglucosamine-1-phosphate (GlcNAc-1-P), which is converted into UDP-GlcNAc by the transfer of uridine 5-monophosphate (from uridine 5-triphosphate), a reaction catalyzed by the N-terminal domain. This is Bifunctional protein GlmU from Geobacillus thermodenitrificans (strain NG80-2).